A 133-amino-acid polypeptide reads, in one-letter code: uncharacterized protein (133 aa).

An N-terminal signal peptide occupies residues methionine 1–glycine 22. Asparagine 111 carries N-linked (GlcNAc...) asparagine glycosylation.

Its subcellular location is the secreted. This is an uncharacterized protein from Saccharomyces cerevisiae (strain ATCC 204508 / S288c) (Baker's yeast).